A 469-amino-acid polypeptide reads, in one-letter code: Spliceosome-associated protein CWC27 homolog (469 aa).

At Ser-2 the chain carries N-acetylserine. Residues 11 to 166 (TNGKVLLKTT…NPHRIKSCEV (156 aa)) form the PPIase cyclophilin-type domain. Residues 175 to 193 (TPREIKKPKNEKPEEEVKK) are compositionally biased toward basic and acidic residues. Disordered regions lie at residues 175 to 415 (TPRE…DDEG) and 428 to 469 (RKVK…KERR). The stretch at 206–229 (SFGEEAEEEEEEVNRVSQSMKGRS) forms a coiled coil. The span at 231–241 (SSHDLLKDDPH) shows a compositional bias: basic and acidic residues. The segment covering 256–278 (TGDLEDDGEDDSAERDEYMEDDE) has biased composition (acidic residues). Basic and acidic residues-rich tracts occupy residues 302 to 341 (GDGE…KVEE) and 356 to 368 (EYRR…EALR). A coiled-coil region spans residues 309–371 (ASRSEELRKE…QKYEALRKQQ (63 aa)). Residues 384–403 (ALLSQFKSKLTQAITETPEN) show a composition bias toward polar residues. Over residues 454-469 (RREESKKLLREKKERR) the composition is skewed to basic and acidic residues.

This sequence belongs to the cyclophilin-type PPIase family. Part of the activated spliceosome B/catalytic step 1 spliceosome, one of the forms of the spliceosome which has a well-formed active site but still cannot catalyze the branching reaction and is composed at least of 52 proteins, the U2, U5 and U6 snRNAs and the pre-mRNA. Recruited during early steps of activated spliceosome B maturation, it is probably one of the first proteins released from this complex as he matures to the spliceosome C complex. Component of the minor spliceosome, which splices U12-type introns.

Its subcellular location is the nucleus. Its function is as follows. As part of the spliceosome, plays a role in pre-mRNA splicing. Probable inactive PPIase with no peptidyl-prolyl cis-trans isomerase activity. As a component of the minor spliceosome, involved in the splicing of U12-type introns in pre-mRNAs. This chain is Spliceosome-associated protein CWC27 homolog, found in Mus musculus (Mouse).